The sequence spans 38 residues: Large ribosomal subunit protein bL36 (38 aa).

Belongs to the bacterial ribosomal protein bL36 family.

This is Large ribosomal subunit protein bL36 from Kosmotoga olearia (strain ATCC BAA-1733 / DSM 21960 / TBF 19.5.1).